Consider the following 248-residue polypeptide: ATP synthase subunit a, chloroplastic (248 aa).

The next 4 membrane-spanning stretches (helical) occupy residues 96-116, 135-155, 200-220, and 221-241; these read VPFIGTMFLFIFASNWSGALL, INTTVALALLTSVAYFYAGLY, LVVAVLVSLVPLIVPVPMMLL, and GLFTSGIQALIFATLAAAYIG.

This sequence belongs to the ATPase A chain family. As to quaternary structure, F-type ATPases have 2 components, CF(1) - the catalytic core - and CF(0) - the membrane proton channel. CF(1) has five subunits: alpha(3), beta(3), gamma(1), delta(1), epsilon(1). CF(0) has four main subunits: a, b, b' and c.

It is found in the plastid. Its subcellular location is the chloroplast thylakoid membrane. Its function is as follows. Key component of the proton channel; it plays a direct role in the translocation of protons across the membrane. This Adiantum capillus-veneris (Maidenhair fern) protein is ATP synthase subunit a, chloroplastic.